The primary structure comprises 529 residues: GMP synthase [glutamine-hydrolyzing] (529 aa).

Positions P13–T204 constitute a Glutamine amidotransferase type-1 domain. The active-site Nucleophile is the C90. Catalysis depends on residues H178 and E180. A GMPS ATP-PPase domain is found at W205–R403. ATP is bound at residue S233 to A239.

Homodimer.

The catalysed reaction is XMP + L-glutamine + ATP + H2O = GMP + L-glutamate + AMP + diphosphate + 2 H(+). Its pathway is purine metabolism; GMP biosynthesis; GMP from XMP (L-Gln route): step 1/1. In terms of biological role, catalyzes the synthesis of GMP from XMP. The sequence is that of GMP synthase [glutamine-hydrolyzing] from Corynebacterium jeikeium (strain K411).